The primary structure comprises 218 residues: Hypoxanthine-guanine phosphoribosyltransferase (218 aa).

Ala2 is subject to N-acetylalanine. Residue Lys69 participates in GMP binding. Lys103 bears the N6-acetyllysine mark. Residue Lys115 forms a Glycyl lysine isopeptide (Lys-Gly) (interchain with G-Cter in SUMO1); alternate linkage. Residue Lys115 forms a Glycyl lysine isopeptide (Lys-Gly) (interchain with G-Cter in SUMO2); alternate linkage. GMP is bound by residues 134-142 (EDIIDTGKT), Lys166, 186-188 (KFV), and Asp194. Asp138 acts as the Proton acceptor in catalysis. Thr142 carries the post-translational modification Phosphothreonine. Asp194 contributes to the Mg(2+) binding site.

This sequence belongs to the purine/pyrimidine phosphoribosyltransferase family. In terms of assembly, homotetramer. Requires Mg(2+) as cofactor.

The protein localises to the cytoplasm. The enzyme catalyses IMP + diphosphate = hypoxanthine + 5-phospho-alpha-D-ribose 1-diphosphate. It catalyses the reaction GMP + diphosphate = guanine + 5-phospho-alpha-D-ribose 1-diphosphate. The protein operates within purine metabolism; IMP biosynthesis via salvage pathway; IMP from hypoxanthine: step 1/1. Converts guanine to guanosine monophosphate, and hypoxanthine to inosine monophosphate. Transfers the 5-phosphoribosyl group from 5-phosphoribosylpyrophosphate onto the purine. Plays a central role in the generation of purine nucleotides through the purine salvage pathway. This is Hypoxanthine-guanine phosphoribosyltransferase (HPRT1) from Sus scrofa (Pig).